We begin with the raw amino-acid sequence, 60 residues long: MNAALIAALLILGALTLDATAYSSTCERIPCTNNSDCHGPDLCQCRPPRGDDFGYFCSEY.

Positions 1-21 (MNAALIAALLILGALTLDATA) are cleaved as a signal peptide. The Cell attachment site motif lies at 49-51 (RGD).

The protein belongs to the ixodegrin family. In terms of processing, contains 3 disulfide bonds. As to expression, expressed in salivary glands.

It localises to the secreted. Its function is as follows. Tick salivary platelet aggregation inhibitor that plays an important part in the anti-hemostatic strategy of ticks. Inhibits platelet aggregation induced by ADP, thrombin and thromboxane A2 (TXA2). Blocks platelet adhesion to soluble collagen (most probably through the binding to alpha-2/beta-1 integrin (ITGA2/ITGB1)) and binds to purified glycoprotein IIb/IIIa (ITGA2B/ITGB3) in a dose-dependent manner. In vivo, reduces thrombus weight effectively in a rat arteriovenous shunt model and inhibits thrombosis in a carrageenan-induced mouse tail thrombosis model. The sequence is that of Ixodegrin YY-39 from Ixodes scapularis (Black-legged tick).